We begin with the raw amino-acid sequence, 357 residues long: Probable butyrate kinase (357 aa).

The protein belongs to the acetokinase family.

The protein localises to the cytoplasm. The catalysed reaction is butanoate + ATP = butanoyl phosphate + ADP. This Thermotoga petrophila (strain ATCC BAA-488 / DSM 13995 / JCM 10881 / RKU-1) protein is Probable butyrate kinase.